Here is a 217-residue protein sequence, read N- to C-terminus: N-(5'-phosphoribosyl)anthranilate isomerase (217 aa).

This sequence belongs to the TrpF family.

The catalysed reaction is N-(5-phospho-beta-D-ribosyl)anthranilate = 1-(2-carboxyphenylamino)-1-deoxy-D-ribulose 5-phosphate. The protein operates within amino-acid biosynthesis; L-tryptophan biosynthesis; L-tryptophan from chorismate: step 3/5. In Synechococcus elongatus (strain ATCC 33912 / PCC 7942 / FACHB-805) (Anacystis nidulans R2), this protein is N-(5'-phosphoribosyl)anthranilate isomerase.